The sequence spans 578 residues: MALRLGVSIGAALGSSHWDDGQRVRQRDFSASVNFTAPVTSRRSLRGSRTGVRILRVSNEGRESYLDMWKNAVDREKKEKAFEKIAENVVAVDGEKEKGGDLEKKSDEFQKILEVSVEERDRIQRMQVVDRAAAAISAARAILASNNSGDGKEGFPNEDNTVTSEVTETPKNAKLGMWSRTVYVPRSETSGTETPGPDFWSWTPPQGSEISSVDLQAVEKPAEFPTLPNPVLEKDKSADSLSIPYESMLSSERHSFTIPPFESLIEVRKEAETKPSSETLSTEHDLDLISSANAEEVARVLDSLDESSTHGVSEDGLKWWKQTGVEKRPDGVVCRWTMIRGVTADGVVEWQDKYWEASDDFGFKELGSEKSGRDATGNVWREFWRESMSQENGVVHMEKTADKWGKSGQGDEWQEKWWEHYDATGKSEKWAHKWCSIDRNTPLDAGHAHVWHERWGEKYDGQGGSTKYTDKWAERWVGDGWDKWGDKWDENFNPSAQGVKQGETWWEGKHGDRWNRSWGEGHNGSGWVHKYGKSSSGEHWDTHVPQETWYEKFPHFGFFHCFDNSVQLRAVKKPSDMS.

Residues 1-56 (MALRLGVSIGAALGSSHWDDGQRVRQRDFSASVNFTAPVTSRRSLRGSRTGVRILR) constitute a chloroplast transit peptide. 2 disordered regions span residues 146–166 (NNSG…TSEV) and 187–206 (SETS…TPPQ).

Belongs to the ESV1 family. Expressed ubiquitously.

Its subcellular location is the plastid. It is found in the chloroplast stroma. In terms of biological role, binds preferentially to highly ordered alpha-glucans, such as starch and crystalline maltodextrins. Involved in the organization of the starch granule matrix, thus influencing starch turnover by modulating the accessibility of starch polymers to modifying and degrading enzymes involved in phosphorylation, hydrolyzes and synthesis, including starch synthases (SSI and SSIII), starch phosphorylases (PHS1), isoamylase, beta-amylase, glucan water dikinase (GWD) and phosphoglucan water dikinase (PWD). This is Protein LIKE EARLY STARVATION, chloroplastic from Arabidopsis thaliana (Mouse-ear cress).